The chain runs to 337 residues: Inositol 2-dehydrogenase (337 aa).

This sequence belongs to the Gfo/Idh/MocA family. In terms of assembly, homotetramer.

It carries out the reaction myo-inositol + NAD(+) = scyllo-inosose + NADH + H(+). Its function is as follows. Involved in the oxidation of myo-inositol (MI) to 2-keto-myo-inositol (2KMI or 2-inosose). The sequence is that of Inositol 2-dehydrogenase from Pseudarthrobacter chlorophenolicus (strain ATCC 700700 / DSM 12829 / CIP 107037 / JCM 12360 / KCTC 9906 / NCIMB 13794 / A6) (Arthrobacter chlorophenolicus).